The following is a 296-amino-acid chain: D-alanine--D-alanine ligase (296 aa).

Residues 103–293 enclose the ATP-grasp domain; the sequence is KEILMHHRMP…FDSFVKRIIE (191 aa). 129 to 180 contacts ATP; the sequence is ISFPAAVKPSSGGSSIATFKVKSIQELKHAYEEASKYGEVMIEQWVTGKEIT. Residues aspartate 247, glutamate 260, and asparagine 262 each coordinate Mg(2+).

The protein belongs to the D-alanine--D-alanine ligase family. The cofactor is Mg(2+). Mn(2+) is required as a cofactor.

The protein resides in the cytoplasm. The enzyme catalyses 2 D-alanine + ATP = D-alanyl-D-alanine + ADP + phosphate + H(+). It functions in the pathway cell wall biogenesis; peptidoglycan biosynthesis. Cell wall formation. The chain is D-alanine--D-alanine ligase from Francisella tularensis subsp. holarctica (strain LVS).